The sequence spans 128 residues: Probable 4-amino-4-deoxy-L-arabinose-phosphoundecaprenol flippase subunit ArnF (128 aa).

Topologically, residues 1-2 (MG) are cytoplasmic. The helical transmembrane segment at 3 to 23 (LIWGLFSVIIASVAQLSLGFA) threads the bilayer. The Periplasmic portion of the chain corresponds to 24 to 35 (ASHLPPMTHLWD). The chain crosses the membrane as a helical span at residues 36-56 (FIAALLAFGLDARILLLGLLG). The Cytoplasmic segment spans residues 57-76 (YLLSVFCWYKTLHKLALSKA). Residues 77–97 (YALLSMSYVLVWIASMVLPGW) traverse the membrane as a helical segment. The Periplasmic segment spans residues 98–100 (EGT). Residues 101–121 (FSLKALLGVACIMSGLMLIFL) form a helical membrane-spanning segment. At 122–128 (PMTKQRY) the chain is on the cytoplasmic side.

The protein belongs to the ArnF family. As to quaternary structure, heterodimer of ArnE and ArnF.

The protein resides in the cell inner membrane. The protein operates within bacterial outer membrane biogenesis; lipopolysaccharide biosynthesis. Its function is as follows. Translocates 4-amino-4-deoxy-L-arabinose-phosphoundecaprenol (alpha-L-Ara4N-phosphoundecaprenol) from the cytoplasmic to the periplasmic side of the inner membrane. The sequence is that of Probable 4-amino-4-deoxy-L-arabinose-phosphoundecaprenol flippase subunit ArnF from Escherichia coli O9:H4 (strain HS).